A 1276-amino-acid polypeptide reads, in one-letter code: Histone-lysine N-methyltransferase PRDM16 (1276 aa).

The span at 1 to 10 (MRSKARARKL) shows a compositional bias: basic residues. Residues 1–68 (MRSKARARKL…DFTPKEGSPY (68 aa)) are disordered. An SET domain is found at 82–211 (ADFELRESSI…PGEELLVHVK (130 aa)). The C2H2-type 1; atypical zinc-finger motif lies at 230 to 253 (FRCDECDELFQSKLDLRRHKKYTC). 5 C2H2-type zinc fingers span residues 281 to 303 (HECKDCERMFPNKYSLEQHMVIH), 309 to 331 (YKCDQCPKAFNWKSNLIRHQMSH), 337 to 360 (FECENCVKVFTDPSNLQRHIRSQH), 366 to 388 (HACPDCGKTFATSSGLKQHKHIH), and 394 to 416 (FICEVCHKSYTQFSNLCRHKRMH). The C2H2-type 7; atypical zinc finger occupies 423–445 (IKCKDCGQMFSTTSSLNKHRRFC). Disordered regions lie at residues 533–657 (SLLK…APPG) and 772–804 (PFDLTTKPKDVKPILPMPKGPSAPASGEEQPLD). Residues 561–570 (AVSNSSQGTT) are compositionally biased toward polar residues. Residues 575-597 (PEEKFESRLEDSCVEKLKTRSSD) are compositionally biased toward basic and acidic residues. Residues 609 to 624 (TTTGTDLDTTTGTGSD) are compositionally biased toward low complexity. The segment covering 632–642 (DPDKDKGKGKS) has biased composition (basic and acidic residues). An interaction with CTBP1, CTBP2 and ZNF516 region spans residues 679 to 1038 (DEQLLTATGA…KHEHENAPVS (360 aa)). The interval 739–1276 (PFTDRALAHN…SGAFHPINHL (538 aa)) is mediates interaction with SKI and regulation of TGF-beta signaling. C2H2-type zinc fingers lie at residues 951–973 (YTCRYCGKIFPRSANLTRHLRTH), 979–1002 (YRCKYCDRSFSISSNLQRHVRNIH), and 1008–1032 (FKCHLCNRCFGQQTNLDRHLKKHEH). Disordered stretches follow at residues 1033 to 1065 (ENAPVSQHPGVLTNHLGTSASSPTSESDNHALL) and 1105 to 1163 (AQCP…EPAA). The segment covering 1047–1058 (HLGTSASSPTSE) has biased composition (polar residues). Acidic residues predominate over residues 1116–1133 (EDVEEEDDDDLEEDDEDS).

It belongs to the PRDM16 family. In terms of assembly, interacts with CEBPA, CEBPB and CEBPD; the interaction is direct. Interacts with PPARG and PPARA; controls brown adipocytes differentiation. Interacts with CTBP1 and CTBP2; represses the expression of WAT-specific genes. Interacts with PPARGC1A and PPARGC1B; interaction with PPARGC1A or PPARGC1B activates the transcription of BAT-specific gene. Interacts with HDAC1, SKI, SMAD2 and SMAD3; the interaction with SKI promotes the recruitment of SMAD3-HDAC1 complex on the promoter of TGF-beta target genes. Interacts with ZNF516; the interaction is direct and may play a role in the transcription of brown adipose tissue-specific gene. As to expression, expressed in uterus and kidney. Expressed in both cardiomyocytes and interstitial cells.

It localises to the nucleus. The protein localises to the cytoplasm. The enzyme catalyses L-lysyl(9)-[histone H3] + S-adenosyl-L-methionine = N(6)-methyl-L-lysyl(9)-[histone H3] + S-adenosyl-L-homocysteine + H(+). Its function is as follows. Binds DNA and functions as a transcriptional regulator. Displays histone methyltransferase activity and monomethylates 'Lys-9' of histone H3 (H3K9me1) in vitro. Probably catalyzes the monomethylation of free histone H3 in the cytoplasm which is then transported to the nucleus and incorporated into nucleosomes where SUV39H methyltransferases use it as a substrate to catalyze histone H3 'Lys-9' trimethylation. Likely to be one of the primary histone methyltransferases along with MECOM/PRDM3 that direct cytoplasmic H3K9me1 methylation. Functions in the differentiation of brown adipose tissue (BAT) which is specialized in dissipating chemical energy in the form of heat in response to cold or excess feeding while white adipose tissue (WAT) is specialized in the storage of excess energy and the control of systemic metabolism. Together with CEBPB, regulates the differentiation of myoblastic precursors into brown adipose cells. Functions as a repressor of TGF-beta signaling. Functionally, binds DNA and functions as a transcriptional regulator. Functions as a repressor of TGF-beta signaling. May regulate granulocyte differentiation. The sequence is that of Histone-lysine N-methyltransferase PRDM16 from Homo sapiens (Human).